Here is a 134-residue protein sequence, read N- to C-terminus: MSWQTYVDDHLMADIEGQQGNHLAAAAILGNDGSVWAQSTTFPKFKPEEITNIMKDFDEPGHLAPTGLFLGGAKYMVIQGEPGAVIRGKKGSGGITIKKTNQALIFGIYEEPVTPGQCNMVVEKIGDYLVDQGY.

Thr-114 is modified (phosphothreonine).

It belongs to the profilin family. As to quaternary structure, occurs in many kinds of cells as a complex with monomeric actin in a 1:1 ratio. In terms of processing, phosphorylated by MAP kinases.

Its subcellular location is the cytoplasm. It is found in the cytoskeleton. Its function is as follows. Binds to actin and affects the structure of the cytoskeleton. At high concentrations, profilin prevents the polymerization of actin, whereas it enhances it at low concentrations. By binding to PIP2, it inhibits the formation of IP3 and DG. This Nicotiana tabacum (Common tobacco) protein is Profilin-2 (PRO2).